A 299-amino-acid polypeptide reads, in one-letter code: MRIIFMGSPGFAVNSLSLLLKSKSEVVAVYTKAPKPSGRGQKPMKSPVHVIAEESNIEVCTPISLKFSAEQEKFRNFKPDVAVVAAYGLILPREILNIPKYGCINIHPSLLPRWRGAAPIQHTILAGDQETGVSIMQLDEGLDSGPILKQEKFLIEKNDNYKTLHDKLSKLGSDLLLKVLNEIEKQLPLKQNDNDACYADKVEDYKIYASDACEVAYRKVKAFYPKAFIKIENKRIRILDADFEALASEQGKIVNDNMHISLKGGTLIPKVVQMEGRNPCSIEDFIRGLKSSMVKKFIE.

109-112 (SLLP) provides a ligand contact to (6S)-5,6,7,8-tetrahydrofolate.

It belongs to the Fmt family.

It carries out the reaction L-methionyl-tRNA(fMet) + (6R)-10-formyltetrahydrofolate = N-formyl-L-methionyl-tRNA(fMet) + (6S)-5,6,7,8-tetrahydrofolate + H(+). Functionally, attaches a formyl group to the free amino group of methionyl-tRNA(fMet). The formyl group appears to play a dual role in the initiator identity of N-formylmethionyl-tRNA by promoting its recognition by IF2 and preventing the misappropriation of this tRNA by the elongation apparatus. This Wolbachia sp. subsp. Drosophila simulans (strain wRi) protein is Methionyl-tRNA formyltransferase.